Consider the following 353-residue polypeptide: Photosystem II protein D1 (353 aa).

T2 carries the post-translational modification N-acetylthreonine. A Phosphothreonine modification is found at T2. Transmembrane regions (helical) follow at residues 29–46 (YIGW…TATS), 118–133 (HFFL…EWEL), and 142–156 (WIAV…AATA). H118 is a binding site for chlorophyll a. Residue Y126 participates in pheophytin a binding. 2 residues coordinate [CaMn4O5] cluster: D170 and E189. A helical transmembrane segment spans residues 197–218 (FHMLGVAGVFGGSLFSAMHGSL). H198 lines the chlorophyll a pocket. A quinone contacts are provided by residues H215 and 264-265 (SF). Residue H215 participates in Fe cation binding. H272 contacts Fe cation. Residues 274 to 288 (FLAAWPVVGIWFTAL) traverse the membrane as a helical segment. H332, E333, D342, and A344 together coordinate [CaMn4O5] cluster. Residues 345 to 353 (SVEAPSVNG) constitute a propeptide that is removed on maturation.

This sequence belongs to the reaction center PufL/M/PsbA/D family. As to quaternary structure, PSII is composed of 1 copy each of membrane proteins PsbA, PsbB, PsbC, PsbD, PsbE, PsbF, PsbH, PsbI, PsbJ, PsbK, PsbL, PsbM, PsbT, PsbX, PsbY, PsbZ, Psb30/Ycf12, at least 3 peripheral proteins of the oxygen-evolving complex and a large number of cofactors. It forms dimeric complexes. The D1/D2 heterodimer binds P680, chlorophylls that are the primary electron donor of PSII, and subsequent electron acceptors. It shares a non-heme iron and each subunit binds pheophytin, quinone, additional chlorophylls, carotenoids and lipids. D1 provides most of the ligands for the Mn4-Ca-O5 cluster of the oxygen-evolving complex (OEC). There is also a Cl(-1) ion associated with D1 and D2, which is required for oxygen evolution. The PSII complex binds additional chlorophylls, carotenoids and specific lipids. serves as cofactor. Tyr-161 forms a radical intermediate that is referred to as redox-active TyrZ, YZ or Y-Z. Post-translationally, C-terminally processed by CTPA; processing is essential to allow assembly of the oxygen-evolving complex and thus photosynthetic growth.

It localises to the plastid. The protein localises to the chloroplast thylakoid membrane. The enzyme catalyses 2 a plastoquinone + 4 hnu + 2 H2O = 2 a plastoquinol + O2. Its function is as follows. Photosystem II (PSII) is a light-driven water:plastoquinone oxidoreductase that uses light energy to abstract electrons from H(2)O, generating O(2) and a proton gradient subsequently used for ATP formation. It consists of a core antenna complex that captures photons, and an electron transfer chain that converts photonic excitation into a charge separation. The D1/D2 (PsbA/PsbD) reaction center heterodimer binds P680, the primary electron donor of PSII as well as several subsequent electron acceptors. The protein is Photosystem II protein D1 of Chaetosphaeridium globosum (Charophycean green alga).